We begin with the raw amino-acid sequence, 468 residues long: Gasdermin-C (468 aa).

Positions 1-230 (MSYTFDWLSK…CVILTSANTK (230 aa)) are triggers pyroptosis.

The protein belongs to the gasdermin family. Homooligomer; homooligomeric ring-shaped pore complex containing 27-28 subunits when inserted in the membrane. In terms of processing, cleavage by CASP8 relieves autoinhibition by releasing the N-terminal moiety (Gasdermin-C, N-terminal) that initiates pyroptosis. Post-translationally, palmitoylated.

The protein resides in the cytoplasm. The protein localises to the cytosol. It localises to the cell membrane. With respect to regulation, the full-length protein before cleavage is inactive: intramolecular interactions between N- and C-terminal domains mediate autoinhibition in the absence of activation signal. The intrinsic pyroptosis-inducing activity is carried by the released N-terminal moiety (Gasdermin-C, N-terminal) following cleavage by caspase CASP8. This form constitutes the precursor of the pore-forming protein: upon cleavage, the released N-terminal moiety (Gasdermin-C, N-terminal) binds to membranes and forms pores, triggering pyroptosis. Its function is as follows. Pore-forming protein that causes membrane permeabilization and pyroptosis. Produced by the cleavage of gasdermin-C by caspase CASP8 in response to death signals. After cleavage, moves to the plasma membrane where it strongly binds to membrane inner leaflet lipids. Homooligomerizes within the membrane and forms pores of 10-15 nanometers (nm) of inner diameter, triggering pyroptosis. The sequence is that of Gasdermin-C from Mus musculus (Mouse).